Consider the following 376-residue polypeptide: UPF0754 membrane protein SSP0953 (376 aa).

2 consecutive transmembrane segments (helical) span residues 4 to 24 and 356 to 376; these read FLVI…TNVI and FLGF…AIFV.

Belongs to the UPF0754 family.

The protein localises to the cell membrane. This chain is UPF0754 membrane protein SSP0953, found in Staphylococcus saprophyticus subsp. saprophyticus (strain ATCC 15305 / DSM 20229 / NCIMB 8711 / NCTC 7292 / S-41).